Here is a 403-residue protein sequence, read N- to C-terminus: Ribosomal RNA large subunit methyltransferase I (403 aa).

The 80-residue stretch at 9 to 88 (YPRLILSKGR…ESIDIAFFTR (80 aa)) folds into the PUA domain.

This sequence belongs to the methyltransferase superfamily. RlmI family.

It is found in the cytoplasm. The enzyme catalyses cytidine(1962) in 23S rRNA + S-adenosyl-L-methionine = 5-methylcytidine(1962) in 23S rRNA + S-adenosyl-L-homocysteine + H(+). Specifically methylates the cytosine at position 1962 (m5C1962) of 23S rRNA. The chain is Ribosomal RNA large subunit methyltransferase I from Salmonella paratyphi C (strain RKS4594).